A 637-amino-acid chain; its full sequence is 1-deoxy-D-xylulose-5-phosphate synthase (637 aa).

Thiamine diphosphate is bound by residues H73 and 113 to 115 (SHA). A Mg(2+)-binding site is contributed by D144. Residues 145-146 (GA), N174, Y285, and E366 each bind thiamine diphosphate. N174 contributes to the Mg(2+) binding site.

Belongs to the transketolase family. DXPS subfamily. As to quaternary structure, homodimer. Mg(2+) is required as a cofactor. It depends on thiamine diphosphate as a cofactor.

The catalysed reaction is D-glyceraldehyde 3-phosphate + pyruvate + H(+) = 1-deoxy-D-xylulose 5-phosphate + CO2. Its pathway is metabolic intermediate biosynthesis; 1-deoxy-D-xylulose 5-phosphate biosynthesis; 1-deoxy-D-xylulose 5-phosphate from D-glyceraldehyde 3-phosphate and pyruvate: step 1/1. In terms of biological role, catalyzes the acyloin condensation reaction between C atoms 2 and 3 of pyruvate and glyceraldehyde 3-phosphate to yield 1-deoxy-D-xylulose-5-phosphate (DXP). The chain is 1-deoxy-D-xylulose-5-phosphate synthase from Streptomyces griseus subsp. griseus (strain JCM 4626 / CBS 651.72 / NBRC 13350 / KCC S-0626 / ISP 5235).